The following is a 75-amino-acid chain: Small ribosomal subunit protein bS18 (75 aa).

It belongs to the bacterial ribosomal protein bS18 family. Part of the 30S ribosomal subunit. Forms a tight heterodimer with protein bS6.

Functionally, binds as a heterodimer with protein bS6 to the central domain of the 16S rRNA, where it helps stabilize the platform of the 30S subunit. The chain is Small ribosomal subunit protein bS18 from Shewanella halifaxensis (strain HAW-EB4).